Consider the following 363-residue polypeptide: Aminomethyltransferase (363 aa).

The protein belongs to the GcvT family. As to quaternary structure, the glycine cleavage system is composed of four proteins: P, T, L and H.

It catalyses the reaction N(6)-[(R)-S(8)-aminomethyldihydrolipoyl]-L-lysyl-[protein] + (6S)-5,6,7,8-tetrahydrofolate = N(6)-[(R)-dihydrolipoyl]-L-lysyl-[protein] + (6R)-5,10-methylene-5,6,7,8-tetrahydrofolate + NH4(+). Its function is as follows. The glycine cleavage system catalyzes the degradation of glycine. The polypeptide is Aminomethyltransferase (Prosthecochloris aestuarii (strain DSM 271 / SK 413)).